We begin with the raw amino-acid sequence, 185 residues long: Elongation factor P (185 aa).

The protein belongs to the elongation factor P family.

It is found in the cytoplasm. Its pathway is protein biosynthesis; polypeptide chain elongation. In terms of biological role, involved in peptide bond synthesis. Stimulates efficient translation and peptide-bond synthesis on native or reconstituted 70S ribosomes in vitro. Probably functions indirectly by altering the affinity of the ribosome for aminoacyl-tRNA, thus increasing their reactivity as acceptors for peptidyl transferase. This Desulforudis audaxviator (strain MP104C) protein is Elongation factor P.